The following is a 136-amino-acid chain: Magnetite biomineralization protein Mms6 (136 aa).

At 1-85 (MGEMEREGAT…AVGGTIWSGK (85 aa)) the chain is on the cytoplasmic side. Residues 86-95 (GLALGLGMGL) form a GL repeat region. Residues 86–106 (GLALGLGMGLGAWGPLILGVV) form a helical membrane-spanning segment. Residues 107–136 (GAGAVYAYMKSRDIEAAQSDEEVELRDALS) are Lumenal-facing. Residues 115-136 (MKSRDIEAAQSDEEVELRDALS) form an MIC, self-assembles, binds magnetite, Fe(2+) and Fe(3+) region.

This sequence belongs to the magnetosome Mms6 family. In terms of assembly, full length protein oligomerizes and interacts with MamA. In terms of processing, may undergo cleavage.

The protein localises to the magnetosome membrane. In terms of biological role, promotes the formation of magnetite in Fe(2+)-rich conditions, when magnetite is not readily formed. Binds both Fe(2+) and Fe(3+). May help control the production of crystals with a specific morphology. May function with MamX, MamY amd MamZ in biomineralization. The 4 genes of this operon collectively influence magnetosome size and number. The sequence is that of Magnetite biomineralization protein Mms6 from Magnetospirillum gryphiswaldense (strain DSM 6361 / JCM 21280 / NBRC 15271 / MSR-1).